The chain runs to 291 residues: tRNA (guanine-N(1)-)-methyltransferase (291 aa).

Residues Gly160 and 184-189 contribute to the S-adenosyl-L-methionine site; that span reads IGDYVL.

It belongs to the RNA methyltransferase TrmD family. As to quaternary structure, homodimer.

It is found in the cytoplasm. It catalyses the reaction guanosine(37) in tRNA + S-adenosyl-L-methionine = N(1)-methylguanosine(37) in tRNA + S-adenosyl-L-homocysteine + H(+). In terms of biological role, specifically methylates guanosine-37 in various tRNAs. This Corynebacterium efficiens (strain DSM 44549 / YS-314 / AJ 12310 / JCM 11189 / NBRC 100395) protein is tRNA (guanine-N(1)-)-methyltransferase.